The sequence spans 507 residues: MDEDNLETALQTYRAQLQQVELALGAGLDASEQADLRQLQGDLKELIELTEASLLSVRKSKLLSTVDQEHQEDAEYLAFQKAIAEEAPVDPGNDSKTVPGSEVQPTPTSSALEEEEEDPDLEDLSGAKVNAPYYSAWGTLEYHNAMVVGAEEAEDGSACVRVLYLYPTHKSLKPCPFFLEGKCRFKENCRFSHGQLVSVDELRPFQDPDLSLLQTGSACLAKHQDGLWHPARITDVDNGYYTVKFDSLLLKEAVVEGDSILPPLRTEATDSSDSDTGDASDSSYARVVEANTVDTGTCSSAFAGWEVHTRGIGSKLLVKMGYEFGKGLGRHAEGRVEPIHAVVLPRGKSLDQCAEILQKKTKQGQTGASRPPRCRRRSSRPEGRPPPRNVFDFLNEKLQSQVPGTPDAGVDTPERRNKDMYHASKSAKQALSLQLFQTEEKIERTQRDIRGIQEALTRNTGRHGMATAHLQEKLEGAQRQLGQLRAQEADLQRKQRKADTHRKMTEF.

Met-1 is modified (N-acetylmethionine). Residues 88-125 form a disordered region; the sequence is PVDPGNDSKTVPGSEVQPTPTSSALEEEEEDPDLEDLS. The segment covering 94 to 111 has biased composition (polar residues); it reads DSKTVPGSEVQPTPTSSA. The segment covering 112-123 has biased composition (acidic residues); that stretch reads LEEEEEDPDLED. The segment at 170-196 adopts a C3H1-type zinc-finger fold; it reads KSLKPCPFFLEGKCRFKENCRFSHGQL. Residues 264-283 are disordered; sequence LRTEATDSSDSDTGDASDSS. Ser-272 is modified (phosphoserine). At Thr-276 the chain carries Phosphothreonine. One can recognise a G-patch domain in the interval 309–355; that stretch reads TRGIGSKLLVKMGYEFGKGLGRHAEGRVEPIHAVVLPRGKSLDQCAE. Ser-349 bears the Phosphoserine mark. Disordered stretches follow at residues 359-389 and 486-507; these read KKTKQGQTGASRPPRCRRRSSRPEGRPPPRN and AQEADLQRKQRKADTHRKMTEF. Positions 487-507 are enriched in basic and acidic residues; it reads QEADLQRKQRKADTHRKMTEF.

As to quaternary structure, interacts with CHD4/Mi-2; the interaction is direct.

It localises to the nucleus. Transcription repressor that specifically binds the 5'-GGAG[GA]A[GA]A-3' consensus sequence. Represses transcription by recruiting the chromatin multiprotein complex NuRD to target promoters. Negatively regulates expression of EGFR, a gene involved in cell proliferation, survival and migration. Its ability to repress genes of the EGFR pathway suggest it may act as a tumor suppressor. The protein is Zinc finger CCCH-type with G patch domain-containing protein (Zgpat) of Rattus norvegicus (Rat).